The sequence spans 529 residues: Cytochrome P450 monooxygenase atmQ (529 aa).

2 helical membrane passes run 22–42 and 51–71; these read YPFA…QQLA and SWVN…IAAF. Position 467 (cysteine 467) interacts with heme.

Belongs to the cytochrome P450 family. Heme serves as cofactor.

It localises to the membrane. It functions in the pathway secondary metabolite biosynthesis. In terms of biological role, cytochrome P450 monooxygenase; part of the ATM2 gene cluster that mediates the biosynthesis of aflatrem, a tremorgenic mycotoxin with acute neurotoxic effects. Synthesis of geranylgeranyl diphosphate (GGPP) by AtmG (a GGPP synthase) precedes condensation of GGPP with indole 3-glycerol phosphate, followed by epoxidation and cyclization by AtmM (a FAD-dependent monooxygenase) and AtmC (a prenyltransferase) to produce paspaline. AtmB is also essential for paspaline production, but its exact role has not been identified yet. AtmP, a cytochrome P450 monooxygenase, subsequently converts paspaline to 13-desoxypaxilline via PC-M6 by removal of the C-30 methyl group and oxidation at C-10. AtmQ, a cytochrome P450 monooxygenase, then catalyzes the oxidation of 13-desoxypaxilline, first at C-7 to produce paspalicine and then at C-13 to form paspalinine. Finally, AtmD prenylates paspalinine to form aflatrem. This is Cytochrome P450 monooxygenase atmQ from Aspergillus flavus.